Here is a 205-residue protein sequence, read N- to C-terminus: Meiotic nuclear division protein 1 homolog (205 aa).

The stretch at 79-147 (LHARKRKLET…CADLEKYKEC (69 aa)) forms a coiled coil.

This sequence belongs to the MND1 family.

The protein localises to the nucleus. Required for proper homologous chromosome pairing and efficient cross-over and intragenic recombination during meiosis. Stimulates both dmc1- and rad51-mediated homologous strand assimilation, which is required for the resolution of meiotic double-strand breaks. The sequence is that of Meiotic nuclear division protein 1 homolog from Xenopus laevis (African clawed frog).